A 476-amino-acid chain; its full sequence is RNA-splicing ligase RtcB homolog (476 aa).

Mn(2+) is bound by residues Asp-90, Cys-93, His-198, His-230, and His-324. Residue 197 to 201 (NHYAE) coordinates GMP. Residues 324–325 (HN), 373–376 (GGTM), Ser-380, 399–402 (HGAG), and Lys-475 each bind GMP. Residue His-399 is the GMP-histidine intermediate of the active site.

The protein belongs to the RtcB family. As to quaternary structure, catalytic component of the tRNA-splicing ligase complex. Mn(2+) serves as cofactor.

The enzyme catalyses a 3'-end 3'-phospho-ribonucleotide-RNA + a 5'-end dephospho-ribonucleoside-RNA + GTP = a ribonucleotidyl-ribonucleotide-RNA + GMP + diphosphate. It carries out the reaction a 3'-end 2',3'-cyclophospho-ribonucleotide-RNA + a 5'-end dephospho-ribonucleoside-RNA + GTP + H2O = a ribonucleotidyl-ribonucleotide-RNA + GMP + diphosphate + H(+). In terms of biological role, catalytic subunit of the tRNA-splicing ligase complex that acts by directly joining spliced tRNA halves to mature-sized tRNAs by incorporating the precursor-derived splice junction phosphate into the mature tRNA as a canonical 3',5'-phosphodiester. May act as an RNA ligase with broad substrate specificity, and may function toward other RNAs. In Chlamydomonas reinhardtii (Chlamydomonas smithii), this protein is RNA-splicing ligase RtcB homolog.